The primary structure comprises 264 residues: Thymidylate synthase (264 aa).

Position 21 (R21) interacts with dUMP. H51 lines the (6R)-5,10-methylene-5,6,7,8-tetrahydrofolate pocket. 126–127 serves as a coordination point for dUMP; it reads RR. Residue C146 is the Nucleophile of the active site. DUMP-binding positions include 166-169, N177, and 207-209; these read RSAD and HLY. Position 169 (D169) interacts with (6R)-5,10-methylene-5,6,7,8-tetrahydrofolate. S263 serves as a coordination point for (6R)-5,10-methylene-5,6,7,8-tetrahydrofolate.

It belongs to the thymidylate synthase family. Bacterial-type ThyA subfamily. Homodimer.

The protein localises to the cytoplasm. The catalysed reaction is dUMP + (6R)-5,10-methylene-5,6,7,8-tetrahydrofolate = 7,8-dihydrofolate + dTMP. It functions in the pathway pyrimidine metabolism; dTTP biosynthesis. Its function is as follows. Catalyzes the reductive methylation of 2'-deoxyuridine-5'-monophosphate (dUMP) to 2'-deoxythymidine-5'-monophosphate (dTMP) while utilizing 5,10-methylenetetrahydrofolate (mTHF) as the methyl donor and reductant in the reaction, yielding dihydrofolate (DHF) as a by-product. This enzymatic reaction provides an intracellular de novo source of dTMP, an essential precursor for DNA biosynthesis. This is Thymidylate synthase from Neisseria gonorrhoeae (strain ATCC 700825 / FA 1090).